The chain runs to 657 residues: UvrABC system protein B (657 aa).

Residues 24-409 (AGVRNQVKSQ…SGHIVQQIIR (386 aa)) enclose the Helicase ATP-binding domain. 37 to 44 (GTTGSGKT) lines the ATP pocket. The Beta-hairpin motif lies at 90 to 113 (YYDYYQPEAYIARSDTYIEKSLLI). Positions 426 to 589 (QVDDLLEEIR…IVPKPIIKAI (164 aa)) constitute a Helicase C-terminal domain. Positions 617-652 (EEQIKKYEALMQRAAKEFRFNEAAKYRDAMQACKEQ) constitute a UVR domain.

Belongs to the UvrB family. In terms of assembly, forms a heterotetramer with UvrA during the search for lesions. Interacts with UvrC in an incision complex.

The protein localises to the cytoplasm. The UvrABC repair system catalyzes the recognition and processing of DNA lesions. A damage recognition complex composed of 2 UvrA and 2 UvrB subunits scans DNA for abnormalities. Upon binding of the UvrA(2)B(2) complex to a putative damaged site, the DNA wraps around one UvrB monomer. DNA wrap is dependent on ATP binding by UvrB and probably causes local melting of the DNA helix, facilitating insertion of UvrB beta-hairpin between the DNA strands. Then UvrB probes one DNA strand for the presence of a lesion. If a lesion is found the UvrA subunits dissociate and the UvrB-DNA preincision complex is formed. This complex is subsequently bound by UvrC and the second UvrB is released. If no lesion is found, the DNA wraps around the other UvrB subunit that will check the other stand for damage. In Chlamydia pneumoniae (Chlamydophila pneumoniae), this protein is UvrABC system protein B.